The primary structure comprises 269 residues: Thymidylate synthase (269 aa).

Arg-21 is a binding site for dUMP. A (6R)-5,10-methylene-5,6,7,8-tetrahydrofolate-binding site is contributed by His-51. 126 to 127 (RR) lines the dUMP pocket. The Nucleophile role is filled by Cys-146. Residues 171–174 (RSGD), Asn-182, and 212–214 (HLY) contribute to the dUMP site. Asp-174 contacts (6R)-5,10-methylene-5,6,7,8-tetrahydrofolate. Ala-268 is a binding site for (6R)-5,10-methylene-5,6,7,8-tetrahydrofolate.

This sequence belongs to the thymidylate synthase family. Bacterial-type ThyA subfamily. As to quaternary structure, homodimer.

The protein resides in the cytoplasm. It catalyses the reaction dUMP + (6R)-5,10-methylene-5,6,7,8-tetrahydrofolate = 7,8-dihydrofolate + dTMP. Its pathway is pyrimidine metabolism; dTTP biosynthesis. Catalyzes the reductive methylation of 2'-deoxyuridine-5'-monophosphate (dUMP) to 2'-deoxythymidine-5'-monophosphate (dTMP) while utilizing 5,10-methylenetetrahydrofolate (mTHF) as the methyl donor and reductant in the reaction, yielding dihydrofolate (DHF) as a by-product. This enzymatic reaction provides an intracellular de novo source of dTMP, an essential precursor for DNA biosynthesis. In Methylocella silvestris (strain DSM 15510 / CIP 108128 / LMG 27833 / NCIMB 13906 / BL2), this protein is Thymidylate synthase.